Here is a 408-residue protein sequence, read N- to C-terminus: Imidazolonepropionase (408 aa).

Residues histidine 73 and histidine 75 each contribute to the Fe(3+) site. 2 residues coordinate Zn(2+): histidine 73 and histidine 75. Residues arginine 82, tyrosine 145, and histidine 178 each contribute to the 4-imidazolone-5-propanoate site. Residue tyrosine 145 coordinates N-formimidoyl-L-glutamate. Position 243 (histidine 243) interacts with Fe(3+). Residue histidine 243 coordinates Zn(2+). Glutamine 246 is a binding site for 4-imidazolone-5-propanoate. A Fe(3+)-binding site is contributed by aspartate 318. Zn(2+) is bound at residue aspartate 318. Residues asparagine 320 and glycine 322 each coordinate N-formimidoyl-L-glutamate. Serine 323 lines the 4-imidazolone-5-propanoate pocket.

Belongs to the metallo-dependent hydrolases superfamily. HutI family. Zn(2+) is required as a cofactor. Fe(3+) serves as cofactor.

It localises to the cytoplasm. It catalyses the reaction 4-imidazolone-5-propanoate + H2O = N-formimidoyl-L-glutamate. It functions in the pathway amino-acid degradation; L-histidine degradation into L-glutamate; N-formimidoyl-L-glutamate from L-histidine: step 3/3. Its function is as follows. Catalyzes the hydrolytic cleavage of the carbon-nitrogen bond in imidazolone-5-propanoate to yield N-formimidoyl-L-glutamate. It is the third step in the universal histidine degradation pathway. The polypeptide is Imidazolonepropionase (Shewanella sediminis (strain HAW-EB3)).